Consider the following 187-residue polypeptide: UPF0301 protein YqgE (187 aa).

The protein belongs to the UPF0301 (AlgH) family.

The polypeptide is UPF0301 protein YqgE (Escherichia fergusonii (strain ATCC 35469 / DSM 13698 / CCUG 18766 / IAM 14443 / JCM 21226 / LMG 7866 / NBRC 102419 / NCTC 12128 / CDC 0568-73)).